The chain runs to 348 residues: MSTGLPEAWPRLLGDVGGSNARFALETAPGVIEDILTLSNERYPTLEDALRDYLAQVGARRVAHAAIGIANPLNGDLVRMTNCHWSFSIEATRRALGLSTLLLLNDFTALALALPRLPRRELAQVGGGAPRPDAPLALIGPGTGLGVSALVPHAGGWRALAGEGGHTSFAPANEREIGIWRYASARFGHVSHERLLSGSGLSLLHRALCALDGAEEAGLAPAEVSARGLSGADARCREALEIFCALLGSAAGNLALTLGARGGVYIGGGIVPRLSGFFEQSPFRRRFEDKGRMSAYLADIPVYLITSAYPALPGVAAHLADHLAPRSDPAPVAAPTHPRGGTAGDMHA.

Residue 14–19 (GDVGGS) coordinates ATP. The interval 327-348 (SDPAPVAAPTHPRGGTAGDMHA) is disordered.

It belongs to the bacterial glucokinase family.

Its subcellular location is the cytoplasm. The catalysed reaction is D-glucose + ATP = D-glucose 6-phosphate + ADP + H(+). This is Glucokinase from Chromobacterium violaceum (strain ATCC 12472 / DSM 30191 / JCM 1249 / CCUG 213 / NBRC 12614 / NCIMB 9131 / NCTC 9757 / MK).